A 412-amino-acid polypeptide reads, in one-letter code: Subtilisin-like protease 6 (412 aa).

The first 20 residues, 1-20, serve as a signal peptide directing secretion; the sequence is MGFITKAIPIVLAALSTVNG. Residues 21–127 constitute a propeptide that is removed on maturation; the sequence is ARILEAGPHA…VRTTTNGTNL (107 aa). An Inhibitor I9 domain is found at 36-120; sequence KYIVVMKKDV…FIEPDFVVRT (85 aa). One can recognise a Peptidase S8 domain in the interval 135–412; the sequence is SWGLARVGSK…SKLIYNGSGK (278 aa). Active-site charge relay system residues include aspartate 167 and histidine 198. Asparagine 252 and asparagine 264 each carry an N-linked (GlcNAc...) asparagine glycan. Serine 358 functions as the Charge relay system in the catalytic mechanism. A glycan (N-linked (GlcNAc...) asparagine) is linked at asparagine 408.

Belongs to the peptidase S8 family.

It is found in the secreted. Its function is as follows. Secreted subtilisin-like serine protease with keratinolytic activity that contributes to pathogenicity. This is Subtilisin-like protease 6 (SUB6) from Arthroderma benhamiae (strain ATCC MYA-4681 / CBS 112371) (Trichophyton mentagrophytes).